The following is a 596-amino-acid chain: Probable lysosomal cobalamin transporter (596 aa).

10 consecutive transmembrane segments (helical) span residues 7–27, 46–66, 95–115, 145–165, 196–216, 313–333, 350–370, 376–396, 420–440, and 507–527; these read AFIWVAYAVAVGIVALIAAIF, IITLTSLLATVLLLPVDIALV, IVYYALYSLDAVLCLLVIPFT, TLFFVVLVVILFLVGFFAPVA, LLISLGTLLYILYTSVGLALL, LVGGILLLLLSVIIWASMLIT, ILGSINIFQPLNWVFVKSSIV, VLMALLVLFLFSSSVTGIAVI, MATVMLTLIILAINYSIAMII, and FFGALAFWAQFVFLAIFLIVF. Residues 566–596 are disordered; sequence WQDIRGKAKNQTPSRGAAGRGIRGDDDHDDD. The span at 587 to 596 shows a compositional bias: basic and acidic residues; sequence IRGDDDHDDD.

The protein belongs to the LIMR family. LMBRD1 subfamily.

It localises to the lysosome membrane. Probable lysosomal cobalamin transporter. Required to export cobalamin from lysosomes allowing its conversion to cofactors. This chain is Probable lysosomal cobalamin transporter, found in Sclerotinia sclerotiorum (strain ATCC 18683 / 1980 / Ss-1) (White mold).